A 130-amino-acid polypeptide reads, in one-letter code: C-type natriuretic peptide 2 (130 aa).

The first 22 residues, 1-22 (MAASSSSFVPLVLLFLAIPVEP), serve as a signal peptide directing secretion. The propeptide occupies 23–103 (RPSMTRDEAQ…LQQQSKTTRR (81 aa)). Residues 57 to 77 (ELLPRRPGPPRSFGASPGALR) form a disordered region. An intrachain disulfide couples Cys114 to Cys130.

Belongs to the natriuretic peptide family.

It is found in the secreted. Exhibits natriuretic and vasodepressant activity. Has cGMP-stimulating activity. May help to regulate body fluid homeostasis in a variety of aquatic environments. The polypeptide is C-type natriuretic peptide 2 (Takifugu rubripes (Japanese pufferfish)).